Here is a 228-residue protein sequence, read N- to C-terminus: Triosephosphate isomerase (228 aa).

Asn-9–Lys-11 contributes to the substrate binding site. Residue His-93 is the Electrophile of the active site. The active-site Proton acceptor is the Glu-141. Substrate is bound by residues Ile-146, Gly-181, and Ala-202–Ser-203.

This sequence belongs to the triosephosphate isomerase family. In terms of assembly, homotetramer; dimer of dimers.

The protein resides in the cytoplasm. It carries out the reaction D-glyceraldehyde 3-phosphate = dihydroxyacetone phosphate. Its pathway is carbohydrate biosynthesis; gluconeogenesis. The protein operates within carbohydrate degradation; glycolysis; D-glyceraldehyde 3-phosphate from glycerone phosphate: step 1/1. Involved in the gluconeogenesis. Catalyzes stereospecifically the conversion of dihydroxyacetone phosphate (DHAP) to D-glyceraldehyde-3-phosphate (G3P). This Pyrobaculum calidifontis (strain DSM 21063 / JCM 11548 / VA1) protein is Triosephosphate isomerase.